Consider the following 663-residue polypeptide: UvrABC system protein B (663 aa).

A compositionally biased stretch (basic and acidic residues) spans 1-10 (MIDKRDDKPF). Positions 1–23 (MIDKRDDKPFKLKSKYKPSGDQP) are disordered. The 241-residue stretch at 31 to 271 (DNIEGGEKAQ…EQSIAKIQAE (241 aa)) folds into the Helicase ATP-binding domain. 44 to 51 (GATGTGKT) contacts ATP. Positions 97-120 (YYDYYQPEAYVPSSDTYIEKDSSV) match the Beta-hairpin motif. The 167-residue stretch at 435-601 (QMDDLLGEIN…TIKKDIRGLI (167 aa)) folds into the Helicase C-terminal domain. The UVR domain maps to 627-662 (KEAINALQKQMQEAAELLDFELAAQMRDLILELKLM).

This sequence belongs to the UvrB family. Forms a heterotetramer with UvrA during the search for lesions. Interacts with UvrC in an incision complex.

It is found in the cytoplasm. The UvrABC repair system catalyzes the recognition and processing of DNA lesions. A damage recognition complex composed of 2 UvrA and 2 UvrB subunits scans DNA for abnormalities. Upon binding of the UvrA(2)B(2) complex to a putative damaged site, the DNA wraps around one UvrB monomer. DNA wrap is dependent on ATP binding by UvrB and probably causes local melting of the DNA helix, facilitating insertion of UvrB beta-hairpin between the DNA strands. Then UvrB probes one DNA strand for the presence of a lesion. If a lesion is found the UvrA subunits dissociate and the UvrB-DNA preincision complex is formed. This complex is subsequently bound by UvrC and the second UvrB is released. If no lesion is found, the DNA wraps around the other UvrB subunit that will check the other stand for damage. This Streptococcus pyogenes serotype M2 (strain MGAS10270) protein is UvrABC system protein B.